Here is a 185-residue protein sequence, read N- to C-terminus: Elongation factor P (185 aa).

Belongs to the elongation factor P family.

The protein localises to the cytoplasm. The protein operates within protein biosynthesis; polypeptide chain elongation. Involved in peptide bond synthesis. Stimulates efficient translation and peptide-bond synthesis on native or reconstituted 70S ribosomes in vitro. Probably functions indirectly by altering the affinity of the ribosome for aminoacyl-tRNA, thus increasing their reactivity as acceptors for peptidyl transferase. The chain is Elongation factor P from Alkaliphilus oremlandii (strain OhILAs) (Clostridium oremlandii (strain OhILAs)).